The primary structure comprises 171 residues: Protein X (171 aa).

Transmembrane regions (helical) follow at residues 11-31, 38-58, and 73-93; these read SWYQ…IYSL, LAGI…VYLM, and AVIA…WLVI.

It localises to the virion membrane. This is Protein X (VPX) from Mus musculus domesticus (western European house mouse).